Here is a 290-residue protein sequence, read N- to C-terminus: uncharacterized protein (290 aa).

Residues 153–178 (EMVPITTSSTTPRSKGDEATSTGAFP) are disordered. Residues 157-178 (ITTSSTTPRSKGDEATSTGAFP) are compositionally biased toward polar residues. Residues 202–222 (LIAVTLLLGGAAIIVFVIFEV) traverse the membrane as a helical segment. Positions 246-276 (KEEDQKPGTTESQLDSQPEKVKHNVPNSSDS) are disordered. The segment covering 252–261 (PGTTESQLDS) has biased composition (polar residues).

It is found in the membrane. This is an uncharacterized protein from Mus musculus (Mouse).